We begin with the raw amino-acid sequence, 576 residues long: TOX high mobility group box family member 3 (576 aa).

Disordered stretches follow at residues 189-258, 422-443, and 519-563; these read NLGG…PQKP, TMVGSAPSTQVSPSVQTQQHQM, and LQHM…QIQS. The segment covering 204-215 has biased composition (low complexity); the sequence is ASKSATPSPSSS. The span at 223–239 shows a compositional bias: basic and acidic residues; it reads EANRAIGEKRAAPDSGK. Residues 240–250 are compositionally biased toward basic residues; sequence KPKTPKKKKKK. A DNA-binding region (HMG box) is located at residues 255–323; the sequence is PQKPVSAYAL…EYLKALAAYR (69 aa). Over residues 428-443 the composition is skewed to low complexity; sequence PSTQVSPSVQTQQHQM. Residues 528–542 are compositionally biased toward polar residues; the sequence is PSPRQHSPVASQITS. A compositionally biased stretch (low complexity) spans 549–563; sequence SPQPASQQHQSQIQS.

In terms of assembly, homodimer. Interacts with CREB1; the interaction is not depolarization dependent. Interacts with CREBBP (via C-terminus). Interacts (via HGM box) with CITED1 (via C-terminus); the interaction increases estrogen-response element (ERE)-dependent transcription and protection against cell death. Interacts with CREB1 (phosphorylated form). As to expression, expressed mainly in epithelial cells. Expressed in the central nervous system (CNS), in the ileum and within the brain in the frontal and occipital lobe.

The protein resides in the nucleus. In terms of biological role, transcriptional coactivator of the p300/CBP-mediated transcription complex. Activates transactivation through cAMP response element (CRE) sites. Protects against cell death by inducing antiapoptotic and repressing pro-apoptotic transcripts. Stimulates transcription from the estrogen-responsive or BCL-2 promoters. Required for depolarization-induced transcription activation of the C-FOS promoter in neurons. Associates with chromatin to the estrogen-responsive C3 promoter region. This Homo sapiens (Human) protein is TOX high mobility group box family member 3 (TOX3).